Consider the following 3674-residue polypeptide: MAGQPHSPRELLGAAGHRSRRPSTELRVPPSPSLTMDSQYETGHIRKLQARHMQMQEKTFTKWINNVFQCGQAGIKIRNLYTELADGIHLLRLLELISGEALPPPSRGRLRVHFLENSSRALAFLRAKVPVPLIGPENIVDGDQTLILGLIWVIILRFQISHISLDKEEFGASAALLSTKEALLVWCQRKTASYTNVNITDFSRSWSDGLGFNALIHAHRPDLLDYGSLRPDRPLHNLAFAFLVAEQELGIAQLLDPEDVAAAQPDERSIMTYVSLYYHYCSRLHQGQTVQRRLTKILLQLQETELLQTQYEQLVADLLRWIAEKQMQLEARDFPDSLPAMRQLLAAFTIFRTQEKPPRLQQRGAAEALLFRLQTALQAQNRRPFLPHEGLGLAELSQCWAGLEWAEAARSQALQQRLLQLQRLETLARRFQHKAALRESFLKDAEQVLDQARAPPASLATVEAAVQRLGMLEAGILPQEGRFQALAEIADILRQEQYHSWADVARRQEEVTVRWQRLLQHLQGQRKQVADMQAVLSLLQEVEAASHQLEELQEPARSTACGQQLAEVVELLQRHDLLEAQVSAHGAHVSHLAQQTAELDSSLGTSVEVLQAKARTLAQLQQSLVALVRARRALLEQTLQRAEFLRNCEEEEAWLKECGQRVGNAALGRDLSQIAGALQKHKALEAEVHRHQAVCVDLVRRGRDLSARRPPTQPDPGERAEAVQGGWQLLQTRVVGRGARLQTALLVLQYFADAAEAASWLRERRSSLERASCGQDQAAAETLLRRHVRLERVLRAFAAELRRLEEQGRAASARASLFTVNSALSPPGESLRNPGPWSEASCHPGPGDAWKMALPAEPDPDFDPNTILQTQDHLSQDYESLRALAQLRRARLEEAMALFGFCSSCGELQLWLEKQTVLLQRVQPQADTLEVMQLKYENFLTALAVGKGLWAEVSSSAEQLRQRYPGNSTQIQRQQEELSQRWGQLEALKREKAVQLAHSVEVCSFLQECGPTQVQLRDVLLQLEALQPGSSEDTCHALQLAQKKTLVLERRVHFLQSVVVKVEEPGYAESQPLQGQVETLQGLLKQVQEQVAQRARRQAETQARQSFLQESQQLLLWAESVQAQLRSKEVSVDVASAQRLLREHQDLLEEIHLWQERLQQLDAQSQPMAALDCPDSQEVPNTLRVLGQQGQELKVLWEQRQQWLQEGLELQKFGREVDGFTATCANHQAWLHLDNLGEDVREALSLLQQHREFGRLLSTLGPRAEALRAHGEKLVQSQHPAAHTVREQLQSIQAQWTRLQGRSEQRRRQLLASLQLQEWKQDVAELMQWMEEKGLMAAHEPSGARRNILQTLKRHEAAESELLATRRHVEALQQVGRELLSRRPCGQEDIQTRLQGLRSKWEALNRKMTERGDELQQAGQQEQLLRQLQDAKEQLEQLEGALQSSETGQDLRSSQRLQKRHQQLESESRTLAAKMAALASMAHGMAASPAILEETQKHLRRLELLQGHLAIRGLQLQASVELHQFCHLSNMELSWVAEHMPHGSPTSYTECLNGAQSLHRKHKELQVEVKAHQGQVQRVLSSGRSLAASGHPQAQHIVEQCQELEGHWAELERACEARAQCLQQAVTFQQYFLDVSELEGWVEEKRPLVSSRDYGRDEAATLRLINKHQALQEELAIYWSSMEELDQTAQTLTGPEVPEQQRVVQERLREQLRALQELAATRDRELEGTLRLHEFLREAEDLQGWLASQKQAAKGGESLGEDPEHALHLCTKFAKFQHQVEMGSQRVAACRLLAESLLERGHSAGPMVRQRQQDLQTAWSELWELTQARGHALRDTETTLRVHRDLLEVLTQVQEKATSLPNNVARDLCGLEAQLRSHQGLERELVGTERQLQELLETAGRVQKLCPGPQAHAVQQRQQAVTQAWAVLQRRMEQRRAQLERARLLARFRTAVRDYASWAARVRQDLQVEESSQEPSSGPLKLSAHQWLRAELEAREKLWQQATQLGQQALLAAGTPTKEVQEELRALQDQRDQVYQTWARKQERLQAEQQEQLFLRECGRLEEILAAQEVSLKTSALGSSVEEVEQLIRKHEVFLKVLTAQDKKEAALRERLKTLRRPRVRDRLPILLQRRMRVKELAESRGHALHASLLMASFTQAATQAEDWIQAWAQQLKEPVPPGDLRDKLKPLLKHQAFEAEVQAHEEVMTSVAKKGEALLAQSHPRAGEVSQRLQGLRKHWEDLRQAMALRGQELEDRRNFLEFLQRVDLAEAWIQEKEVKMNVGDLGQDLEHCLQLRRRLREFRGNSAGDTVGDACIRSISDLSLQLKNRDPEEVKIICQRRSQLNNRWASFHGNLLRYQQQLEGALEIHVLSRELDNVTKRIQEKEALIQALDCGKDLESVQRLLRKHEELEREVHPIQAQVESLEREVGRLCQRSPEAAHGLRHRQQEVAESWWQLRSRAQKRREALDALHQAQKLQAMLQELLVSAQRLRAQMDTSPAPRSPVEARRMLEEHQECKAELDSWTDSISLARSTGQQLLTAGHPFSSDIRQVLAGLEQELSSLEGAWQEHQLQLQQALELQLFLSSVEKMERWLCSKEDSLASEGLWDPLAPMEPLLWKHKMLEWDLEVQAGKISALEATARGLHQGGHPEAQSALGRCQAMLLRKEALFRQAGTRRHRLEELRQLQAFLQDSQEVAAWLREKNLVALEEGLLDTAMLPAQLQKQQNFQAELDASMHQQQELQREGQRLLQGGHPASEAIQERLEELGALWGELQDNSQKKVAKLQKACEALRLRRSMEELENWLEPIEVELRAPTVGQALPGVGELLGTQRELEAAVDKKARQAEALLGQAQAFVREGHCLAQDVEEQARRLLQRFKSLREPLQERRTALEARSLLLKFFRDADEEMAWVQEKLPLAAAQDYGQSLSAVRHLQEQHQNLESEMSSHEALTRVVLGTGYKLVQAGHFAAHEVAARVQQLEKAMAHLRAEAARRRLLLQQAQEAQQFLTELLEAGSWLAERGHVLDSEDMGHSAEATQALLRRLEATKRDLEAFSPRIERLQQTAALLESRKNPESPKVLAQLQAVREAHAELLRRAEARGHGLQEQLQLHQLERETLLLDAWLTTKAATAESQDYGQDLEGVKVLEEKFDAFRKEVQSLGQAKVYALRKLAGTLERGAPRRYPHIQAQRSRIEAAWERLDQAIKARTENLAAAHEVHSFQQAAAELQGRMQEKTALMKGEDGGHSLSSVRTLQQQHRRLERELEAMEKEVARLQTEACRLGQLHPAAPGGLAKVQEAWATLQAKAQERGQWLAQAAQGHAFLGRCQELLAWAQERQELASSEELAEDVAGAEQLLGQHEELGQEIRECRLQAQDLRQEGQQLVDNSHFMSAEVTECLQELEGRLQELEEAWALRWQRCAESWGLQKLRQRLEQAEAWLACWEGLLLKPDYGHSVSDVELLLHRHQDLEKLLAAQEEKFAQMQKTEMEQELLLQPQELKPGRAGSSLTSFQWRPSGHQGLGAQLAETRDPQDAKGTPTMEGSLEFKQHLLPGGRQPSSSSWDSCRGNLQGSSLSLFLDERMAAEKVASIALLDLTGARCERLRGRHGRKHTFSLRLTSGAEILFAAPSEEQAESWWRALGSTAAQSLSPKLKAKPVSSLNECTTKDARPGCLLRSDP.

The disordered stretch occupies residues 1 to 37; sequence MAGQPHSPRELLGAAGHRSRRPSTELRVPPSPSLTMD. The actin-binding stretch occupies residues 1 to 279; that stretch reads MAGQPHSPRE…IMTYVSLYYH (279 aa). 2 consecutive Calponin-homology (CH) domains span residues 54-159 and 177-282; these read QMQE…LRFQ and LSTK…HYCS. 8 Spectrin repeats span residues 307-416, 428-529, 642-742, 747-810, 900-996, 1103-1206, 1209-1311, and 1315-1417; these read LQTQ…ALQQ, ARRF…RKQV, AEFL…ARLQ, VLQY…QGRA, GFCS…AVQL, ARQS…WLQE, ELQK…RQLL, and QLQE…ELQQ. Residues 1441–1469 form a disordered region; it reads ALQSSETGQDLRSSQRLQKRHQQLESESR. Residues 1442-1456 show a composition bias toward polar residues; sequence LQSSETGQDLRSSQR. Spectrin repeat units follow at residues 1521–1624, 1628–1727, 1731–1835, 1842–1940, 1944–2046, 2052–2146, 2150–2253, 2256–2361, 2366–2467, 2471–2574, 2577–2680, 2683–2784, 2791–2890, 2894–2997, 3000–3103, 3106–3209, 3213–3311, 3318–3415, and 3422–3488; these read ELHQ…CLQQ, FQQY…RELE, RLHE…ALRD, VHRD…AQLE, LLAR…ERLQ, QLFL…HALH, LMAS…ELED, NFLE…QQLE, IHVL…EALD, QAQK…QLQQ, ELQL…RLEE, QLQA…AKLQ, RLRR…TALE, LLLK…LLQQ, EAQQ…GLQE, QLHQ…ENLA, EVHS…QWLA, AFLG…RWQR, and LQKL…EQEL. The PH domain occupies 3533–3641; it reads TPTMEGSLEF…WWRALGSTAA (109 aa).

Belongs to the spectrin family. Probably associates with an alpha chain. Interacts (via C-terminus) with TRPC4. As to expression, expressed at very low levels in many tissues, with strongest expression in cerebellum, spinal cord, stomach, pituitary gland, liver, pancreas, salivary gland, kidney, bladder, and heart.

Its subcellular location is the cytoplasm. The protein localises to the cytoskeleton. The protein is Spectrin beta chain, non-erythrocytic 5 (SPTBN5) of Homo sapiens (Human).